We begin with the raw amino-acid sequence, 1057 residues long: Nuclear RNAi defective-3 protein (1057 aa).

Disordered stretches follow at residues 1–89 and 344–388; these read MDLL…GLSV and LTNS…ERTV. The span at 17–30 shows a compositional bias: low complexity; that stretch reads STAKKPATSASSTP. Composition is skewed to basic and acidic residues over residues 67–81 and 356–388; these read PKRE…DPKR and GGRE…ERTV. A PAZ domain is found at 387–500; that stretch reads TVSHYQRQFQ…YPMELMSILP (114 aa). Residues 677–1001 enclose the Piwi domain; that stretch reads GIIAEKRPDM…LAKRGHNNYK (325 aa).

It localises to the cytoplasm. Its subcellular location is the nucleus. Its function is as follows. Transports small interfering RNAs (siRNAs) from the cytoplasm to the nucleus. Required for RNA interference (RNAi) in nuclei. Required for exogenous RNAi-induced H3K27 methylation. This is Nuclear RNAi defective-3 protein (nrde-3) from Caenorhabditis elegans.